Reading from the N-terminus, the 230-residue chain is UPF0173 metal-dependent hydrolase RHOS4_08540 (230 aa).

Belongs to the UPF0173 family.

In Cereibacter sphaeroides (strain ATCC 17023 / DSM 158 / JCM 6121 / CCUG 31486 / LMG 2827 / NBRC 12203 / NCIMB 8253 / ATH 2.4.1.) (Rhodobacter sphaeroides), this protein is UPF0173 metal-dependent hydrolase RHOS4_08540.